The following is a 450-amino-acid chain: Regulator of sigma-E protease RseP (450 aa).

Residues 1 to 21 (MLSFLWDLASFIVALGVLITV) traverse the membrane as a helical segment. His-22 lines the Zn(2+) pocket. Topologically, residues 22–103 (HEFGHFWVAR…VGQRAAIIAA (82 aa)) are periplasmic. The active site involves Glu-23. His-26 serves as a coordination point for Zn(2+). The helical transmembrane segment at 104 to 124 (GPVANFIFAIFAYWLVFIIGV) threads the bilayer. Residues 125–375 (PGVRPVVGEI…KGAGMTAELG (251 aa)) lie on the Cytoplasmic side of the membrane. 2 consecutive PDZ domains span residues 127–220 (VRPV…PRGP) and 222–309 (IEPV…PKVI). A helical membrane pass occupies residues 376–396 (VVYYLPFLALISVNLGIINLF). Residues 397 to 429 (PLPVLDGGHLLFLAIEKIKGGPVSERVQDFCYR) are Periplasmic-facing. A helical membrane pass occupies residues 430 to 450 (IGSILLVLLMGLALFNDFSRL).

This sequence belongs to the peptidase M50B family. As to quaternary structure, interacts with RseA; the third transmembrane domain can be cross-linked to the transmembrane domain of RseA. Requires Zn(2+) as cofactor.

It is found in the cell inner membrane. With respect to regulation, inhibited by Zn(2+) chelator 1,10-phenanthroline. In terms of biological role, a site-2 regulated intramembrane protease (S2P) that cleaves the peptide bond between 'Ala-108' and 'Cys-109' in the transmembrane region of RseA. Part of a regulated intramembrane proteolysis (RIP) cascade. Acts on DegS-cleaved RseA to release the cytoplasmic domain of RseA, residue 'Val-148' of RseA may be required for this. This provides the cell with sigma-E (RpoE) activity through the proteolysis of RseA. Can also cleave sequences in transmembrane regions of other proteins (such as LacY) as well as liberated signal peptides of beta-lactamase, OmpF, LivK, SecM, PhoA, LivJ, OmpC, Lpp and TorA, probably within the membrane. Cleaves FecR within its transmembrane region to release an N-terminal cytoplasmic fragment which binds to sigma factor FecI, allowing it to activate transcription of the fecABCDE operon which mediates ferric citrate transport. The chain is Regulator of sigma-E protease RseP (rseP) from Escherichia coli (strain K12).